Consider the following 424-residue polypeptide: Tyrosine--tRNA ligase (424 aa).

Tyr-37 is a binding site for L-tyrosine. A 'HIGH' region motif is present at residues 42 to 51; sequence PTADSLHLGH. Lys-144 is modified (N6-acetyllysine). L-tyrosine is bound by residues Tyr-175 and Gln-179. The short motif at 235-239 is the 'KMSKS' region element; the sequence is KFGKT. Lys-238 contacts ATP. The region spanning 357–414 is the S4 RNA-binding domain; that stretch reads ADLMQALVDSELQPSRGQARKTIASNAITINGEKQSDPEYFFKEEDRLFGRFTLLRRG.

The protein belongs to the class-I aminoacyl-tRNA synthetase family. TyrS type 1 subfamily. As to quaternary structure, homodimer.

Its subcellular location is the cytoplasm. The catalysed reaction is tRNA(Tyr) + L-tyrosine + ATP = L-tyrosyl-tRNA(Tyr) + AMP + diphosphate + H(+). Catalyzes the attachment of tyrosine to tRNA(Tyr) in a two-step reaction: tyrosine is first activated by ATP to form Tyr-AMP and then transferred to the acceptor end of tRNA(Tyr). The protein is Tyrosine--tRNA ligase of Escherichia coli O127:H6 (strain E2348/69 / EPEC).